Here is a 423-residue protein sequence, read N- to C-terminus: Gamma-glutamyl phosphate reductase (423 aa).

This sequence belongs to the gamma-glutamyl phosphate reductase family.

The protein localises to the cytoplasm. The enzyme catalyses L-glutamate 5-semialdehyde + phosphate + NADP(+) = L-glutamyl 5-phosphate + NADPH + H(+). The protein operates within amino-acid biosynthesis; L-proline biosynthesis; L-glutamate 5-semialdehyde from L-glutamate: step 2/2. Catalyzes the NADPH-dependent reduction of L-glutamate 5-phosphate into L-glutamate 5-semialdehyde and phosphate. The product spontaneously undergoes cyclization to form 1-pyrroline-5-carboxylate. This Pseudomonas putida (strain ATCC 47054 / DSM 6125 / CFBP 8728 / NCIMB 11950 / KT2440) protein is Gamma-glutamyl phosphate reductase.